The chain runs to 127 residues: Glycine cleavage system H protein 2 (127 aa).

The 82-residue stretch at 24–105 (SVTVGISDHA…PYGSWIFKLK (82 aa)) folds into the Lipoyl-binding domain. N6-lipoyllysine is present on K65.

Belongs to the GcvH family. As to quaternary structure, the glycine cleavage system is composed of four proteins: P, T, L and H. (R)-lipoate serves as cofactor.

The glycine cleavage system catalyzes the degradation of glycine. The H protein shuttles the methylamine group of glycine from the P protein to the T protein. The polypeptide is Glycine cleavage system H protein 2 (Pseudomonas putida (strain ATCC 47054 / DSM 6125 / CFBP 8728 / NCIMB 11950 / KT2440)).